A 274-amino-acid chain; its full sequence is Bis(5'-nucleosyl)-tetraphosphatase, symmetrical (274 aa).

This sequence belongs to the Ap4A hydrolase family.

It catalyses the reaction P(1),P(4)-bis(5'-adenosyl) tetraphosphate + H2O = 2 ADP + 2 H(+). Functionally, hydrolyzes diadenosine 5',5'''-P1,P4-tetraphosphate to yield ADP. This is Bis(5'-nucleosyl)-tetraphosphatase, symmetrical from Janthinobacterium sp. (strain Marseille) (Minibacterium massiliensis).